A 60-amino-acid chain; its full sequence is uncharacterized protein (60 aa).

Residues 38-58 (SILAGGIIPVLFFFPLFLFLY) traverse the membrane as a helical segment.

It is found in the membrane. This is an uncharacterized protein from Saccharomyces cerevisiae (strain ATCC 204508 / S288c) (Baker's yeast).